We begin with the raw amino-acid sequence, 163 residues long: Cyclic pyranopterin monophosphate synthase (163 aa).

Residues methionine 75 to histidine 77 and methionine 113 to glutamate 114 contribute to the substrate site. The active site involves aspartate 128.

The protein belongs to the MoaC family. As to quaternary structure, homohexamer; trimer of dimers.

The enzyme catalyses (8S)-3',8-cyclo-7,8-dihydroguanosine 5'-triphosphate = cyclic pyranopterin phosphate + diphosphate. The protein operates within cofactor biosynthesis; molybdopterin biosynthesis. Catalyzes the conversion of (8S)-3',8-cyclo-7,8-dihydroguanosine 5'-triphosphate to cyclic pyranopterin monophosphate (cPMP). This Desulforapulum autotrophicum (strain ATCC 43914 / DSM 3382 / VKM B-1955 / HRM2) (Desulfobacterium autotrophicum) protein is Cyclic pyranopterin monophosphate synthase.